The chain runs to 435 residues: Glutamyl-tRNA reductase (435 aa).

Residues 49 to 52 (TCNR), S109, 114 to 116 (ETQ), and Q120 each bind substrate. C50 (nucleophile) is an active-site residue. 189–194 (GAGEMS) lines the NADP(+) pocket.

This sequence belongs to the glutamyl-tRNA reductase family. In terms of assembly, homodimer.

It catalyses the reaction (S)-4-amino-5-oxopentanoate + tRNA(Glu) + NADP(+) = L-glutamyl-tRNA(Glu) + NADPH + H(+). It functions in the pathway porphyrin-containing compound metabolism; protoporphyrin-IX biosynthesis; 5-aminolevulinate from L-glutamyl-tRNA(Glu): step 1/2. Catalyzes the NADPH-dependent reduction of glutamyl-tRNA(Glu) to glutamate 1-semialdehyde (GSA). This Listeria monocytogenes serotype 4b (strain F2365) protein is Glutamyl-tRNA reductase.